The sequence spans 264 residues: Proteasome subunit beta type-5 (264 aa).

Positions methionine 1–glycine 59 are cleaved as a propeptide — removed in mature form. The Nucleophile role is filled by threonine 60. A bortezomib-binding site is contributed by alanine 108.

It belongs to the peptidase T1B family. As to quaternary structure, the 26S proteasome consists of a 20S proteasome core and two 19S regulatory subunits. The 20S proteasome core is a barrel-shaped complex made of 28 subunits that are arranged in four stacked rings. The two outer rings are each formed by seven alpha subunits, and the two inner rings are formed by seven beta subunits. The proteolytic activity is exerted by three beta-subunits PSMB5, PSMB6 and PSMB7. Directly interacts with POMP. Interacts with ABCB1 and TAP1. In terms of tissue distribution, expressed in uterus at the embryo implantation site.

Its subcellular location is the cytoplasm. The protein resides in the nucleus. The catalysed reaction is Cleavage of peptide bonds with very broad specificity.. Component of the 20S core proteasome complex involved in the proteolytic degradation of most intracellular proteins. This complex plays numerous essential roles within the cell by associating with different regulatory particles. Associated with two 19S regulatory particles, forms the 26S proteasome and thus participates in the ATP-dependent degradation of ubiquitinated proteins. The 26S proteasome plays a key role in the maintenance of protein homeostasis by removing misfolded or damaged proteins that could impair cellular functions, and by removing proteins whose functions are no longer required. Associated with the PA200 or PA28, the 20S proteasome mediates ubiquitin-independent protein degradation. This type of proteolysis is required in several pathways including spermatogenesis (20S-PA200 complex) or generation of a subset of MHC class I-presented antigenic peptides (20S-PA28 complex). Within the 20S core complex, PSMB5 displays a chymotrypsin-like activity. The chain is Proteasome subunit beta type-5 (Psmb5) from Mus musculus (Mouse).